The primary structure comprises 388 residues: Processive diacylglycerol beta-glucosyltransferase (388 aa).

The protein belongs to the glycosyltransferase 28 family. UgtP subfamily.

The protein localises to the cell membrane. It catalyses the reaction a 1,2-diacyl-3-O-(beta-D-glucopyranosyl)-sn-glycerol + UDP-alpha-D-glucose = a 1,2-diacyl-3-O-(beta-D-Glc-(1-&gt;6)-beta-D-Glc)-sn-glycerol + UDP + H(+). The enzyme catalyses a 1,2-diacyl-3-O-(beta-D-Glc-(1-&gt;6)-beta-D-Glc)-sn-glycerol + UDP-alpha-D-glucose = a 1,2-diacyl-3-O-(beta-D-Glc-(1-&gt;6)-beta-D-Glc-(1-&gt;6)-beta-D-Glc)-sn-glycerol + UDP + H(+). It carries out the reaction a 1,2-diacyl-sn-glycerol + UDP-alpha-D-glucose = a 1,2-diacyl-3-O-(beta-D-glucopyranosyl)-sn-glycerol + UDP + H(+). The protein operates within glycolipid metabolism; diglucosyl-diacylglycerol biosynthesis. Processive glucosyltransferase involved in the biosynthesis of both the bilayer- and non-bilayer-forming membrane glucolipids. Is able to successively transfer up to three glucosyl residues to diacylglycerol (DAG), thereby catalyzing the formation of beta-monoglucosyl-DAG (3-O-(beta-D-glucopyranosyl)-1,2-diacyl-sn-glycerol), beta-diglucosyl-DAG (3-O-(beta-D-glucopyranosyl-beta-(1-&gt;6)-D-glucopyranosyl)-1,2-diacyl-sn-glycerol) and beta-triglucosyl-DAG (3-O-(beta-D-glucopyranosyl-beta-(1-&gt;6)-D-glucopyranosyl-beta-(1-&gt;6)-D-glucopyranosyl)-1,2-diacyl-sn-glycerol). Beta-diglucosyl-DAG is the predominant glycolipid found in Bacillales and is also used as a membrane anchor for lipoteichoic acid (LTA). In Bacillus mycoides (strain KBAB4) (Bacillus weihenstephanensis), this protein is Processive diacylglycerol beta-glucosyltransferase.